We begin with the raw amino-acid sequence, 134 residues long: Large ribosomal subunit protein bL17 (134 aa).

This sequence belongs to the bacterial ribosomal protein bL17 family. In terms of assembly, part of the 50S ribosomal subunit. Contacts protein L32.

In Aromatoleum aromaticum (strain DSM 19018 / LMG 30748 / EbN1) (Azoarcus sp. (strain EbN1)), this protein is Large ribosomal subunit protein bL17.